A 77-amino-acid chain; its full sequence is Delta/omega-plectoxin-Pt1a (77 aa).

Positions 1 to 20 (MKHLIVAVVLLSALAICTSA) are cleaved as a signal peptide. Residues 21-34 (EEEQVNVPFRPEER) constitute a propeptide that is removed on maturation. Disulfide bonds link C38–C51, C45–C57, C50–C67, C54–C74, and C59–C65. The O-palmitoyl serine moiety is linked to residue S73. C74 is modified (cysteine amide).

The protein belongs to the neurotoxin 02 (plectoxin) family. 01 (Tx3) subfamily. Expressed by the venom gland.

Its subcellular location is the secreted. Functionally, excitatory toxin that acts on both calcium and sodium (Nav) channels. It preferentially blocks a subset of calcium channels that is apparently not required for neurotransmitter release, it decreases threshold for sodium channel activation and it slows sodium channel inactivation. As it enhances synaptic transmission by prolonging presynaptic release of neurotransmitter, its effects on sodium and calcium channels may act synergistically to sustain the terminal excitability. The sequence is that of Delta/omega-plectoxin-Pt1a from Plectreurys tristis (Spider).